The following is a 231-amino-acid chain: NADH-ubiquinone oxidoreductase chain 4 (231 aa).

A run of 7 helical transmembrane segments spans residues 1–21 (PIAG…YGII), 34–54 (MFLP…LTCL), 63–85 (IAYS…TPWG), 89–111 (AMAL…NTTY), 128–148 (ILPM…AIPP), 156–176 (LLIM…LGLS), and 211–231 (LLMI…ELII).

This sequence belongs to the complex I subunit 4 family.

The protein localises to the mitochondrion membrane. The enzyme catalyses a ubiquinone + NADH + 5 H(+)(in) = a ubiquinol + NAD(+) + 4 H(+)(out). Core subunit of the mitochondrial membrane respiratory chain NADH dehydrogenase (Complex I) that is believed to belong to the minimal assembly required for catalysis. Complex I functions in the transfer of electrons from NADH to the respiratory chain. The immediate electron acceptor for the enzyme is believed to be ubiquinone. This chain is NADH-ubiquinone oxidoreductase chain 4 (MT-ND4), found in Agkistrodon piscivorus piscivorus (Eastern cottonmouth).